Reading from the N-terminus, the 507-residue chain is F-box only protein 31 (507 aa).

The segment at Arg19–Glu42 is disordered. Phosphoserine is present on Ser33. Over residues Ser33 to Glu42 the composition is skewed to acidic residues. At Thr37 the chain carries Phosphothreonine. Positions Arg50–Glu55 match the D box motif. Residues Arg50–Arg96 enclose the F-box domain. The Zn(2+) site is built by Cys192, His200, Cys216, and His222. Ser264 carries the phosphoserine; by ATM modification. The DDL motif signature appears at Asp283 to Leu285. Residues Arg364–Ser421 form a disordered region. A compositionally biased stretch (basic and acidic residues) spans Ala374–Glu385. Ser448 is modified (phosphoserine).

It belongs to the FBXO31 family. In terms of assembly, part of a SCF (SKP1-cullin-F-box) protein ligase complex SCF(FBXO31) composed of CUL1, SKP1, RBX1 and FBXO31. Interacts (when phosphorylated at Ser-33) with CDC20, promoting ubiquitination by the APC/C complex. Post-translationally, phosphorylation at Ser-264 by ATM following gamma-irradiation results in its stabilization. Phosphorylation at Ser-448 in absence of stress promotes its ubiquitination and degradation by the SCF(FBXO46) complex. Phosphorylation at Ser-33 by AKT1 promotes association with CDC20 and ubiquitination by the APC/C complex. Ubiquitinated by the SCF(FBXO46) complex in absence of stress, promoting its degradation. Ubiquitinated by the APC/C complex following phosphorylation at Ser-33, leading to its degradation by the proteasome.

The protein localises to the cytoplasm. It is found in the cytoskeleton. It localises to the microtubule organizing center. The protein resides in the centrosome. The protein operates within protein modification; protein ubiquitination. Substrate-recognition component of the SCF(FBXO31) protein ligase complex, which specifically mediates the ubiquitination of proteins amidated at their C-terminus in response to oxidative stress, leading to their degradation by the proteasome. FBXO31 specifically recognizes and binds C-terminal peptides bearing an amide: C-terminal amidation in response to oxidative stress takes place following protein fragmentation. The SCF(FBXO31) also plays a role in G1 arrest following DNA damage by mediating ubiquitination of phosphorylated cyclin-D1 (CCND1), promoting its degradation by the proteasome, resulting in G1 arrest. The SCF(FBXO31) complex is however not a major regulator of CCND1 stability during the G1/S transition. In response to genotoxic stress, the SCF(FBXO31) complex directs ubiquitination and degradation of phosphorylated MDM2, thereby promoting p53/TP53-mediated DNA damage response. SCF(FBXO31) complex is required for genomic integrity by catalyzing ubiquitination and degradation of cyclin-A (CCNA1 and/or CCNA2) during the G1 phase. In response to genotoxic stress, the SCF(FBXO31) complex directs ubiquitination and degradation of phosphorylated FBXO46 and MAP2K6. SCF(FBXO31) complex promotes ubiquitination and degradation of CDT1 during the G2 phase to prevent re-replication. The SCF(FBXO31) complex also mediates ubiquitination and degradation of DUSP6, OGT and PARD6A. This Rattus norvegicus (Rat) protein is F-box only protein 31.